The primary structure comprises 613 residues: Glutamyl-tRNA(Gln) amidotransferase subunit E (613 aa).

This sequence belongs to the GatB/GatE family. GatE subfamily. Heterodimer of GatD and GatE.

The catalysed reaction is L-glutamyl-tRNA(Gln) + L-glutamine + ATP + H2O = L-glutaminyl-tRNA(Gln) + L-glutamate + ADP + phosphate + H(+). Its function is as follows. Allows the formation of correctly charged Gln-tRNA(Gln) through the transamidation of misacylated Glu-tRNA(Gln) in organisms which lack glutaminyl-tRNA synthetase. The reaction takes place in the presence of glutamine and ATP through an activated gamma-phospho-Glu-tRNA(Gln). The GatDE system is specific for glutamate and does not act on aspartate. In Archaeoglobus fulgidus (strain ATCC 49558 / DSM 4304 / JCM 9628 / NBRC 100126 / VC-16), this protein is Glutamyl-tRNA(Gln) amidotransferase subunit E.